The primary structure comprises 389 residues: Succinate--CoA ligase [ADP-forming] subunit beta (389 aa).

The ATP-grasp domain occupies 9–244; that stretch reads KEILRKYNVP…LDEEDANEIE (236 aa). ATP contacts are provided by residues Lys46, 53 to 55, Glu99, Ala102, and Glu107; that span reads GRG. Mg(2+)-binding residues include Asn199 and Asp213. Substrate-binding positions include Asn264 and 321–323; that span reads GIM.

It belongs to the succinate/malate CoA ligase beta subunit family. In terms of assembly, heterotetramer of two alpha and two beta subunits. Requires Mg(2+) as cofactor.

The enzyme catalyses succinate + ATP + CoA = succinyl-CoA + ADP + phosphate. The catalysed reaction is GTP + succinate + CoA = succinyl-CoA + GDP + phosphate. It functions in the pathway carbohydrate metabolism; tricarboxylic acid cycle; succinate from succinyl-CoA (ligase route): step 1/1. In terms of biological role, succinyl-CoA synthetase functions in the citric acid cycle (TCA), coupling the hydrolysis of succinyl-CoA to the synthesis of either ATP or GTP and thus represents the only step of substrate-level phosphorylation in the TCA. The beta subunit provides nucleotide specificity of the enzyme and binds the substrate succinate, while the binding sites for coenzyme A and phosphate are found in the alpha subunit. This Cupriavidus pinatubonensis (strain JMP 134 / LMG 1197) (Cupriavidus necator (strain JMP 134)) protein is Succinate--CoA ligase [ADP-forming] subunit beta.